Reading from the N-terminus, the 170-residue chain is Small ribosomal subunit protein uS5 (170 aa).

Residues 16–79 form the S5 DRBM domain; sequence IEDQLVAINR…EAGKKNMISV (64 aa).

Belongs to the universal ribosomal protein uS5 family. As to quaternary structure, part of the 30S ribosomal subunit. Contacts proteins S4 and S8.

With S4 and S12 plays an important role in translational accuracy. Functionally, located at the back of the 30S subunit body where it stabilizes the conformation of the head with respect to the body. The protein is Small ribosomal subunit protein uS5 of Lactobacillus delbrueckii subsp. bulgaricus (strain ATCC 11842 / DSM 20081 / BCRC 10696 / JCM 1002 / NBRC 13953 / NCIMB 11778 / NCTC 12712 / WDCM 00102 / Lb 14).